We begin with the raw amino-acid sequence, 81 residues long: Costars family protein ABRACL (81 aa).

It belongs to the costars family.

In Coturnix coturnix (Common quail), this protein is Costars family protein ABRACL.